We begin with the raw amino-acid sequence, 224 residues long: MPWSPLAALSWALVLRLLALLWPPGRGEACSCAPAHPQQHVCHSALVIRAKISSEKVVPASEDPADTQKMIRYEIKQIKMFKGFEKAKDIQYVYTPFDSSLCGVKLETNSQKQYLLTGQILSDGKVFIHLCNYIEPWEDLSLVQRESLNHHYHQNCGCQITTCYAVPCTISAPDECLWTDWLLERKLYGYQAQHYVCMKHVDGICSWYRGHLHLRKEYVDIVQP.

A signal peptide spans 1-29 (MPWSPLAALSWALVLRLLALLWPPGRGEA). C30 lines the Zn(2+) pocket. Involved in metalloproteinase-binding regions lie at residues 30–33 (CSCA) and 99–100 (SS). 6 disulfides stabilise this stretch: C30–C102, C32–C131, C42–C156, C158–C205, C163–C168, and C176–C197. The NTR domain occupies 30-156 (CSCAPAHPQQ…SLNHHYHQNC (127 aa)).

This sequence belongs to the protease inhibitor I35 (TIMP) family. In terms of tissue distribution, expressed in retina, smooth muscle, skin, pancreas, skeletal muscle, heart, brain, lung, kidney and testis. Not found in cartilage, spleen and liver.

It localises to the secreted. Functionally, complexes with metalloproteinases (such as collagenases) and irreversibly inactivates them by binding to their catalytic zinc cofactor. The protein is Metalloproteinase inhibitor 4 (Timp4) of Rattus norvegicus (Rat).